Consider the following 148-residue polypeptide: Probable TtuB-protein conjugate cleaving protease (148 aa).

One can recognise an MPN domain in the interval 22–148 (HGLVLYVPRG…EGQEVALVVL (127 aa)). The Proton donor/acceptor role is filled by Glu-47. Zn(2+)-binding residues include His-101, His-103, and Asp-114. The JAMM motif signature appears at 101-114 (HSHPKGPALPSPRD).

Belongs to the peptidase M67B family. The cofactor is Zn(2+).

In terms of biological role, probable metalloprotease that cleaves the ubiquitin-like modifier protein TtuB from protein conjugates, hydrolyzing the isopeptide bond between a lysine residue of the target protein and the C-terminal glycine of the modifier protein. Does not seem to work for all the TtuB conjugates. This Thermus thermophilus (strain ATCC BAA-163 / DSM 7039 / HB27) protein is Probable TtuB-protein conjugate cleaving protease.